Here is a 171-residue protein sequence, read N- to C-terminus: 3-hydroxydecanoyl-[acyl-carrier-protein] dehydratase (171 aa).

Residue H69 is part of the active site.

This sequence belongs to the thioester dehydratase family. FabA subfamily. As to quaternary structure, homodimer.

The protein resides in the cytoplasm. It carries out the reaction a (3R)-hydroxyacyl-[ACP] = a (2E)-enoyl-[ACP] + H2O. The catalysed reaction is (3R)-hydroxydecanoyl-[ACP] = (2E)-decenoyl-[ACP] + H2O. It catalyses the reaction (2E)-decenoyl-[ACP] = (3Z)-decenoyl-[ACP]. The protein operates within lipid metabolism; fatty acid biosynthesis. Necessary for the introduction of cis unsaturation into fatty acids. Catalyzes the dehydration of (3R)-3-hydroxydecanoyl-ACP to E-(2)-decenoyl-ACP and then its isomerization to Z-(3)-decenoyl-ACP. Can catalyze the dehydratase reaction for beta-hydroxyacyl-ACPs with saturated chain lengths up to 16:0, being most active on intermediate chain length. This chain is 3-hydroxydecanoyl-[acyl-carrier-protein] dehydratase, found in Caulobacter sp. (strain K31).